A 331-amino-acid polypeptide reads, in one-letter code: MARMYYDTDANLDLLAGKTIAIIGYGSQGHAHALNLKDSGINVIVGLYPGSKSAKKAEEAGLKVLSVAEAAQAADWIMILLPDEVQKAVYTHEIAPYLSEGKVLCFAHGFNIHFGQVVPPPTVDVVMIAPKGPGHLVRRTYEQGEGVPCLFAVYQDATGQARDRAMAYAKGIGGTRAGILETTFREETETDLFGEQVVLCGGLSALIKGGFETLVNAGYQPELAYFECLHEVKLIVDLIVEGGLAKMRDSISNTAEYGDLTRGPRIVTDETRAEMKKILREIQTGQFAREFVLENQSGKPGFTAMRRQEAEHPIEEVGKDLRAMFSWLKDK.

A KARI N-terminal Rossmann domain is found at Ala2–Thr182. NADP(+) contacts are provided by residues Tyr25–Gln28, Ser51, Ser53, and Asp83–Gln86. His108 is a catalytic residue. Residue Gly134 participates in NADP(+) binding. One can recognise a KARI C-terminal knotted domain in the interval Thr183–Leu328. Mg(2+) contacts are provided by Asp191, Glu195, Glu227, and Glu231. Residue Ser252 participates in substrate binding.

Belongs to the ketol-acid reductoisomerase family. Mg(2+) serves as cofactor.

The catalysed reaction is (2R)-2,3-dihydroxy-3-methylbutanoate + NADP(+) = (2S)-2-acetolactate + NADPH + H(+). The enzyme catalyses (2R,3R)-2,3-dihydroxy-3-methylpentanoate + NADP(+) = (S)-2-ethyl-2-hydroxy-3-oxobutanoate + NADPH + H(+). It participates in amino-acid biosynthesis; L-isoleucine biosynthesis; L-isoleucine from 2-oxobutanoate: step 2/4. Its pathway is amino-acid biosynthesis; L-valine biosynthesis; L-valine from pyruvate: step 2/4. In terms of biological role, involved in the biosynthesis of branched-chain amino acids (BCAA). Catalyzes an alkyl-migration followed by a ketol-acid reduction of (S)-2-acetolactate (S2AL) to yield (R)-2,3-dihydroxy-isovalerate. In the isomerase reaction, S2AL is rearranged via a Mg-dependent methyl migration to produce 3-hydroxy-3-methyl-2-ketobutyrate (HMKB). In the reductase reaction, this 2-ketoacid undergoes a metal-dependent reduction by NADPH to yield (R)-2,3-dihydroxy-isovalerate. The polypeptide is Ketol-acid reductoisomerase (NADP(+)) (Rippkaea orientalis (strain PCC 8801 / RF-1) (Cyanothece sp. (strain PCC 8801))).